The chain runs to 49 residues: Light-harvesting protein B800/850/890 alpha-3 chain (49 aa).

Over M1–V14 the chain is Cytoplasmic. Residues G15–L35 form a helical membrane-spanning segment. A bacteriochlorophyll is bound at residue H31. The Periplasmic portion of the chain corresponds to T36 to W49.

This sequence belongs to the antenna complex alpha subunit family. The core complex is formed by different alpha and beta chains, binding bacteriochlorophyll molecules, and arranged most probably in tetrameric structures disposed around the reaction center. The non-pigmented gamma chains may constitute additional components.

Its subcellular location is the cell inner membrane. Antenna complexes are light-harvesting systems, which transfer the excitation energy to the reaction centers. This chain is Light-harvesting protein B800/850/890 alpha-3 chain, found in Halorhodospira halophila (strain DSM 244 / SL1) (Ectothiorhodospira halophila (strain DSM 244 / SL1)).